Consider the following 429-residue polypeptide: Cytochrome bc1 complex Rieske iron-sulfur subunit (429 aa).

The segment at 1–45 (MSRADDDAVGVPPTCGGRSDEEERRIVPGPNPQDGAKDGAKATAV) is disordered. 3 helical membrane passes run 96-116 (VAVW…IFLF), 137-157 (PLYG…AVLY), and 207-227 (FGVG…GGLI). The region spanning 316 to 410 (RNPVMLIRIK…ITIDTDGYLV (95 aa)) is the Rieske domain. 4 residues coordinate [2Fe-2S] cluster: Cys353, His355, Cys372, and His375. Cys358 and Cys374 are oxidised to a cystine.

This sequence belongs to the Rieske iron-sulfur protein family. As to quaternary structure, the cytochrome bc1 complex is composed of a cytochrome b (QcrB), the Rieske iron-sulfur protein (QcrA) and a diheme cytochrome c (QcrC) subunit. [2Fe-2S] cluster serves as cofactor.

Its subcellular location is the cell membrane. In terms of biological role, iron-sulfur subunit of the cytochrome bc1 complex, an essential component of the respiratory electron transport chain required for ATP synthesis. The bc1 complex catalyzes the oxidation of menaquinol and the reduction of cytochrome c in the respiratory chain. The bc1 complex operates through a Q-cycle mechanism that couples electron transfer to generation of the proton gradient that drives ATP synthesis. This is Cytochrome bc1 complex Rieske iron-sulfur subunit (qcrA) from Mycobacterium bovis (strain ATCC BAA-935 / AF2122/97).